An 876-amino-acid chain; its full sequence is Liprin-beta-2 (876 aa).

Residues 101-313 (AASNETYQER…TGLLNQYRKV (213 aa)) are a coiled coil. S329, S363, and S387 each carry phosphoserine. The segment at 356–376 (EMPPRCSSPTVGPPPLPQKSL) is disordered. Disordered regions lie at residues 425–451 (LPGK…PDAT) and 470–500 (VVND…PKGI). The segment covering 473–489 (DLSSTSSGTESGPQSPL) has biased composition (polar residues). A Phosphoserine modification is found at S512. The disordered stretch occupies residues 527-553 (RGGLRATAGPRLSRTRDSKGQKSDANA). 3 consecutive SAM domains span residues 558–622 (WSTE…INTK), 630–693 (LDHI…LHVN), and 718–783 (WSNH…KFNA).

Belongs to the liprin family. Liprin-beta subfamily. In terms of assembly, forms homodimers and heterodimers. As to expression, widely expressed.

May regulate the disassembly of focal adhesions. Did not bind receptor-like tyrosine phosphatases type 2A. This is Liprin-beta-2 (PPFIBP2) from Homo sapiens (Human).